A 372-amino-acid chain; its full sequence is UDP-N-acetylglucosamine--N-acetylmuramyl-(pentapeptide) pyrophosphoryl-undecaprenol N-acetylglucosamine transferase (372 aa).

Residues 14–16 (TGG), asparagine 128, arginine 169, serine 201, isoleucine 257, and glutamine 302 each bind UDP-N-acetyl-alpha-D-glucosamine.

The protein belongs to the glycosyltransferase 28 family. MurG subfamily.

It is found in the cell inner membrane. The enzyme catalyses di-trans,octa-cis-undecaprenyl diphospho-N-acetyl-alpha-D-muramoyl-L-alanyl-D-glutamyl-meso-2,6-diaminopimeloyl-D-alanyl-D-alanine + UDP-N-acetyl-alpha-D-glucosamine = di-trans,octa-cis-undecaprenyl diphospho-[N-acetyl-alpha-D-glucosaminyl-(1-&gt;4)]-N-acetyl-alpha-D-muramoyl-L-alanyl-D-glutamyl-meso-2,6-diaminopimeloyl-D-alanyl-D-alanine + UDP + H(+). Its pathway is cell wall biogenesis; peptidoglycan biosynthesis. Its function is as follows. Cell wall formation. Catalyzes the transfer of a GlcNAc subunit on undecaprenyl-pyrophosphoryl-MurNAc-pentapeptide (lipid intermediate I) to form undecaprenyl-pyrophosphoryl-MurNAc-(pentapeptide)GlcNAc (lipid intermediate II). The polypeptide is UDP-N-acetylglucosamine--N-acetylmuramyl-(pentapeptide) pyrophosphoryl-undecaprenol N-acetylglucosamine transferase (Bacteroides thetaiotaomicron (strain ATCC 29148 / DSM 2079 / JCM 5827 / CCUG 10774 / NCTC 10582 / VPI-5482 / E50)).